A 199-amino-acid chain; its full sequence is N-(5'-phosphoribosyl)anthranilate isomerase (199 aa).

The protein belongs to the TrpF family.

It carries out the reaction N-(5-phospho-beta-D-ribosyl)anthranilate = 1-(2-carboxyphenylamino)-1-deoxy-D-ribulose 5-phosphate. Its pathway is amino-acid biosynthesis; L-tryptophan biosynthesis; L-tryptophan from chorismate: step 3/5. This Solibacter usitatus (strain Ellin6076) protein is N-(5'-phosphoribosyl)anthranilate isomerase.